The sequence spans 461 residues: Photosystem II CP43 reaction center protein (461 aa).

Positions 1-2 (ME) are excised as a propeptide. Threonine 3 carries the N-acetylthreonine modification. At threonine 3 the chain carries Phosphothreonine. A run of 5 helical transmembrane segments spans residues 57–81 (LFEV…PHLA), 122–143 (LLGP…KDRN), 166–188 (KASY…RKIT), 243–263 (KPFA…LSYS), and 279–300 (WFNN…ASQA). Residue glutamate 355 participates in [CaMn4O5] cluster binding. The helical transmembrane segment at 435–459 (RARAAAAGFEKGIDRDFEPVLSMTP) threads the bilayer.

Belongs to the PsbB/PsbC family. PsbC subfamily. PSII is composed of 1 copy each of membrane proteins PsbA, PsbB, PsbC, PsbD, PsbE, PsbF, PsbH, PsbI, PsbJ, PsbK, PsbL, PsbM, PsbT, PsbX, PsbY, PsbZ, Psb30/Ycf12, at least 3 peripheral proteins of the oxygen-evolving complex and a large number of cofactors. It forms dimeric complexes. The cofactor is Binds multiple chlorophylls and provides some of the ligands for the Ca-4Mn-5O cluster of the oxygen-evolving complex. It may also provide a ligand for a Cl- that is required for oxygen evolution. PSII binds additional chlorophylls, carotenoids and specific lipids..

It is found in the plastid. The protein localises to the chloroplast thylakoid membrane. Its function is as follows. One of the components of the core complex of photosystem II (PSII). It binds chlorophyll and helps catalyze the primary light-induced photochemical processes of PSII. PSII is a light-driven water:plastoquinone oxidoreductase, using light energy to abstract electrons from H(2)O, generating O(2) and a proton gradient subsequently used for ATP formation. The sequence is that of Photosystem II CP43 reaction center protein from Lotus japonicus (Lotus corniculatus var. japonicus).